Consider the following 254-residue polypeptide: Putative ankyrin-containing lipoprotein Lxx09580 (254 aa).

The first 22 residues, 1-22, serve as a signal peptide directing secretion; it reads MTEIRYVRLLTLVLASSVLLAG. Cys23 is lipidated: N-palmitoyl cysteine. The S-diacylglycerol cysteine moiety is linked to residue Cys23. ANK repeat units lie at residues 56–85, 89–118, 122–151, 155–184, and 188–222; these read AATA…AIED, GGRT…DVNA, IQDS…DVNA, FNGT…DLDH, and PGWT…NPDI.

It localises to the cell membrane. The protein is Putative ankyrin-containing lipoprotein Lxx09580 of Leifsonia xyli subsp. xyli (strain CTCB07).